The primary structure comprises 201 residues: Large ribosomal subunit protein uL4 (201 aa).

The disordered stretch occupies residues 44–68 (RAQKSRAEVSGSGRKPWRQKGTGRA).

Belongs to the universal ribosomal protein uL4 family. Part of the 50S ribosomal subunit.

One of the primary rRNA binding proteins, this protein initially binds near the 5'-end of the 23S rRNA. It is important during the early stages of 50S assembly. It makes multiple contacts with different domains of the 23S rRNA in the assembled 50S subunit and ribosome. Functionally, forms part of the polypeptide exit tunnel. This Buchnera aphidicola subsp. Acyrthosiphon pisum (strain APS) (Acyrthosiphon pisum symbiotic bacterium) protein is Large ribosomal subunit protein uL4.